A 469-amino-acid chain; its full sequence is Ribosomal protein uS12 methylthiotransferase RimO (469 aa).

In terms of domain architecture, MTTase N-terminal spans 3-119 (TRVYMHTLGC…VARIVSDAQA (117 aa)). C12, C48, C82, C154, C158, and C161 together coordinate [4Fe-4S] cluster. A Radical SAM core domain is found at 140 to 370 (SLPSHTAYLK…MAVQQAISRA (231 aa)). In terms of domain architecture, TRAM spans 373–441 (QAMIGRRVEV…EYDLVGRVVA (69 aa)). The interval 444 to 469 (PSRAARPLPAAPRAAPARKGGLNVLR) is disordered. Residues 447 to 461 (AARPLPAAPRAAPAR) are compositionally biased toward low complexity.

Belongs to the methylthiotransferase family. RimO subfamily. [4Fe-4S] cluster is required as a cofactor.

The protein localises to the cytoplasm. The enzyme catalyses L-aspartate(89)-[ribosomal protein uS12]-hydrogen + (sulfur carrier)-SH + AH2 + 2 S-adenosyl-L-methionine = 3-methylsulfanyl-L-aspartate(89)-[ribosomal protein uS12]-hydrogen + (sulfur carrier)-H + 5'-deoxyadenosine + L-methionine + A + S-adenosyl-L-homocysteine + 2 H(+). Catalyzes the methylthiolation of an aspartic acid residue of ribosomal protein uS12. The polypeptide is Ribosomal protein uS12 methylthiotransferase RimO (Anaeromyxobacter sp. (strain K)).